Here is a 516-residue protein sequence, read N- to C-terminus: MSLEHWNLCLQRLQSEFSTSQFNTWIRPLQAEMLPNGELCLSAPNRFVLDWVSNKYQTRIKELLSEFAGDDLAPALKLAVKAQNFAQANQMSPPPPPVSSEPAINPLNNEVARESGYRPGFGLMDDEEGSPNADLEFEAPLTLSGTGLRGELEPYEQGQLPLTAPKRKVQVEGGINHGANLNNSFTFDNFIEGKSNQLAHAAALQVAENPGGAYNPLFIYGGVGLGKTHLMQAVGTEMMRHNPNAKVVYLHSERFVADMVKALQLNAINDFKRYYRSVDALLIDDIQFFAGKDRTQEEFFHTFNALLEGGQQMILTCDRYPKEIQGLEDRLKSRFGWGLTVAIEPPELETRVAILMRKADESGIKLSYDSAFFIAQKIRSNVRELEGALKRVIANSHFTGRAITPDFVRESLKDLLALQDKLVNIDNIQRIVAEYYKIKISDLLSKRRSRSVARPRQVAMSLAKELTNHSLPEIGDAFGGRDHTTALHAIRKIKELQDTDSDIREDYKQLMRILTT.

The interval 1–72 (MSLEHWNLCL…LLSEFAGDDL (72 aa)) is domain I, interacts with DnaA modulators. Residues 72–179 (LAPALKLAVK…QVEGGINHGA (108 aa)) are domain II. Residues 180-396 (NLNNSFTFDN…GALKRVIANS (217 aa)) form a domain III, AAA+ region region. ATP contacts are provided by Gly-224, Gly-226, Lys-227, and Thr-228. Residues 397–516 (HFTGRAITPD…YKQLMRILTT (120 aa)) are domain IV, binds dsDNA.

The protein belongs to the DnaA family. As to quaternary structure, oligomerizes as a right-handed, spiral filament on DNA at oriC.

The protein localises to the cytoplasm. Its function is as follows. Plays an essential role in the initiation and regulation of chromosomal replication. ATP-DnaA binds to the origin of replication (oriC) to initiate formation of the DNA replication initiation complex once per cell cycle. Binds the DnaA box (a 9 base pair repeat at the origin) and separates the double-stranded (ds)DNA. Forms a right-handed helical filament on oriC DNA; dsDNA binds to the exterior of the filament while single-stranded (ss)DNA is stabiized in the filament's interior. The ATP-DnaA-oriC complex binds and stabilizes one strand of the AT-rich DNA unwinding element (DUE), permitting loading of DNA polymerase. After initiation quickly degrades to an ADP-DnaA complex that is not apt for DNA replication. Binds acidic phospholipids. This chain is Chromosomal replication initiator protein DnaA, found in Marinomonas sp. (strain MWYL1).